We begin with the raw amino-acid sequence, 821 residues long: Ent-isokaur-15-ene synthase (821 aa).

The Mg(2+) site is built by aspartate 556, aspartate 560, asparagine 701, threonine 705, and glutamate 709. A DDXXD motif motif is present at residues 556-560; it reads DDFFD.

Belongs to the terpene synthase family. It depends on Mg(2+) as a cofactor.

The enzyme catalyses ent-copalyl diphosphate = ent-isokaurene + diphosphate. Its pathway is secondary metabolite biosynthesis; terpenoid biosynthesis. Functionally, involved in the biosynthesis of ent-kaurene diterpenoids natural products. Catalyzes the conversion of ent-copalyl diphosphate to the phytoalexin precursor ent-isokaur-15-ene. This Oryza sativa subsp. indica (Rice) protein is Ent-isokaur-15-ene synthase.